A 317-amino-acid polypeptide reads, in one-letter code: Protein CbxX, plasmid (317 aa).

Glycine 85–threonine 92 provides a ligand contact to ATP.

The protein belongs to the CbxX/CfxQ family.

In terms of biological role, seems to be necessary for the expression of RuBisCO. The protein is Protein CbxX, plasmid (cbxXP) of Cupriavidus necator (strain ATCC 17699 / DSM 428 / KCTC 22496 / NCIMB 10442 / H16 / Stanier 337) (Ralstonia eutropha).